Here is a 1738-residue protein sequence, read N- to C-terminus: Interaptin (1738 aa).

The interval Met-1–Tyr-248 is actin-binding. Topologically, residues Met-1–Pro-1705 are cytoplasmic. Calponin-homology (CH) domains lie at Ile-22–Gln-128 and Thr-146–Gln-249. 3 disordered regions span residues Ser-285–Ser-350, Ile-1068–Asp-1090, and Leu-1589–Ile-1627. Positions Gln-292–Asn-301 are enriched in low complexity. Over residues Leu-302 to Lys-316 the composition is skewed to polar residues. Low complexity-rich tracts occupy residues Ser-317 to Thr-344, Ile-1068 to Leu-1086, and Leu-1589 to Pro-1617. The stretch at Glu-373 to Gln-1598 forms a coiled coil. A helical; Anchor for type IV membrane protein transmembrane segment spans residues Ile-1706–Phe-1726.

This sequence belongs to the alpha-actinin family.

Its subcellular location is the nucleus membrane. It localises to the endoplasmic reticulum membrane. It is found in the golgi apparatus. The protein resides in the golgi stack membrane. The protein localises to the cytoplasm. Its subcellular location is the cytoskeleton. It localises to the microtubule organizing center. It is found in the centrosome. Its function is as follows. May function as linker between cellular membranes and the actin cytoskeleton. Required for normal development of fruiting bodies. The polypeptide is Interaptin (abpD) (Dictyostelium discoideum (Social amoeba)).